Reading from the N-terminus, the 309-residue chain is Malate dehydrogenase (309 aa).

NAD(+)-binding positions include 9 to 14 (GAGFVG) and Asp-33. Positions 82 and 88 each coordinate substrate. Residues Asn-95 and 118–120 (VNN) each bind NAD(+). Substrate is bound by residues Asn-120 and Arg-151. The active-site Proton acceptor is His-175.

This sequence belongs to the LDH/MDH superfamily. MDH type 3 family.

The enzyme catalyses (S)-malate + NAD(+) = oxaloacetate + NADH + H(+). In terms of biological role, catalyzes the reversible oxidation of malate to oxaloacetate. This chain is Malate dehydrogenase, found in Chloroflexus aurantiacus (strain ATCC 29364 / DSM 637 / Y-400-fl).